Here is a 397-residue protein sequence, read N- to C-terminus: ATP phosphoribosyltransferase regulatory subunit (397 aa).

This sequence belongs to the class-II aminoacyl-tRNA synthetase family. HisZ subfamily. In terms of assembly, heteromultimer composed of HisG and HisZ subunits.

Its subcellular location is the cytoplasm. It functions in the pathway amino-acid biosynthesis; L-histidine biosynthesis; L-histidine from 5-phospho-alpha-D-ribose 1-diphosphate: step 1/9. In terms of biological role, required for the first step of histidine biosynthesis. May allow the feedback regulation of ATP phosphoribosyltransferase activity by histidine. The chain is ATP phosphoribosyltransferase regulatory subunit from Halalkalibacterium halodurans (strain ATCC BAA-125 / DSM 18197 / FERM 7344 / JCM 9153 / C-125) (Bacillus halodurans).